Here is a 590-residue protein sequence, read N- to C-terminus: Beta-(1--&gt;2)glucan export ATP-binding/permease protein NdvA (590 aa).

The region spanning 21–301 (VALICGANVA…MSAFANQISE (281 aa)) is the ABC transmembrane type-1 domain. A run of 6 helical transmembrane segments spans residues 22-42 (ALIC…PIMF), 55-75 (VFST…AFVL), 136-156 (QHLS…SMDV), 158-178 (MSMV…LVMK), 248-268 (LSST…VTHG), and 275-295 (VIAF…MSAF). The 235-residue stretch at 335–569 (VRFEDVGFEF…NGRFASLLRA (235 aa)) folds into the ABC transporter domain. 368–375 (GPTGAGKT) is an ATP binding site.

This sequence belongs to the ABC transporter superfamily. Beta-(1--&gt;2)glucan exporter (TC 3.A.1.108.1) family. In terms of assembly, homodimer.

The protein localises to the cell inner membrane. It carries out the reaction [(1-&gt;2)-beta-D-glucosyl](n)(in) + ATP + H2O = [(1-&gt;2)-beta-D-glucosyl](n)(out) + ADP + phosphate + H(+). Involved in beta-(1--&gt;2)glucan export. Transmembrane domains (TMD) form a pore in the inner membrane and the ATP-binding domain (NBD) is responsible for energy generation. In Mesorhizobium japonicum (strain LMG 29417 / CECT 9101 / MAFF 303099) (Mesorhizobium loti (strain MAFF 303099)), this protein is Beta-(1--&gt;2)glucan export ATP-binding/permease protein NdvA.